The primary structure comprises 191 residues: Potassium-transporting ATPase KdpC subunit (191 aa).

Residues 8–28 (LFLFLLLLLVTGLAYPLLTTV) form a helical membrane-spanning segment.

The protein belongs to the KdpC family. The system is composed of three essential subunits: KdpA, KdpB and KdpC.

The protein localises to the cell inner membrane. Its function is as follows. Part of the high-affinity ATP-driven potassium transport (or Kdp) system, which catalyzes the hydrolysis of ATP coupled with the electrogenic transport of potassium into the cytoplasm. This subunit acts as a catalytic chaperone that increases the ATP-binding affinity of the ATP-hydrolyzing subunit KdpB by the formation of a transient KdpB/KdpC/ATP ternary complex. This Pectobacterium atrosepticum (strain SCRI 1043 / ATCC BAA-672) (Erwinia carotovora subsp. atroseptica) protein is Potassium-transporting ATPase KdpC subunit.